The following is a 152-amino-acid chain: D-aminoacyl-tRNA deacylase (152 aa).

The Gly-cisPro motif, important for rejection of L-amino acids motif lies at 142-143; the sequence is GP.

This sequence belongs to the DTD family. As to quaternary structure, homodimer.

The protein localises to the cytoplasm. The enzyme catalyses glycyl-tRNA(Ala) + H2O = tRNA(Ala) + glycine + H(+). It catalyses the reaction a D-aminoacyl-tRNA + H2O = a tRNA + a D-alpha-amino acid + H(+). Its function is as follows. An aminoacyl-tRNA editing enzyme that deacylates mischarged D-aminoacyl-tRNAs. Also deacylates mischarged glycyl-tRNA(Ala), protecting cells against glycine mischarging by AlaRS. Acts via tRNA-based rather than protein-based catalysis; rejects L-amino acids rather than detecting D-amino acids in the active site. By recycling D-aminoacyl-tRNA to D-amino acids and free tRNA molecules, this enzyme counteracts the toxicity associated with the formation of D-aminoacyl-tRNA entities in vivo and helps enforce protein L-homochirality. The chain is D-aminoacyl-tRNA deacylase from Paraburkholderia phymatum (strain DSM 17167 / CIP 108236 / LMG 21445 / STM815) (Burkholderia phymatum).